The sequence spans 374 residues: Chaperone protein DnaJ (374 aa).

One can recognise a J domain in the interval 5–71 (DLYAILGVCR…QKRASYDRFG (67 aa)). The CR-type zinc finger occupies 132–210 (GVEKQIRIAT…CQGTGRVKDT (79 aa)). Residues C145, C148, C162, C165, C184, C187, C198, and C201 each contribute to the Zn(2+) site. 4 CXXCXGXG motif repeats span residues 145–152 (CGECHGSG), 162–169 (CPTCNGAG), 184–191 (CPTCHGRG), and 198–205 (CNKCQGTG).

Belongs to the DnaJ family. In terms of assembly, homodimer. Zn(2+) serves as cofactor.

Its subcellular location is the cytoplasm. Its function is as follows. Participates actively in the response to hyperosmotic and heat shock by preventing the aggregation of stress-denatured proteins and by disaggregating proteins, also in an autonomous, DnaK-independent fashion. Unfolded proteins bind initially to DnaJ; upon interaction with the DnaJ-bound protein, DnaK hydrolyzes its bound ATP, resulting in the formation of a stable complex. GrpE releases ADP from DnaK; ATP binding to DnaK triggers the release of the substrate protein, thus completing the reaction cycle. Several rounds of ATP-dependent interactions between DnaJ, DnaK and GrpE are required for fully efficient folding. Also involved, together with DnaK and GrpE, in the DNA replication of plasmids through activation of initiation proteins. The chain is Chaperone protein DnaJ from Dichelobacter nodosus (strain VCS1703A).